A 509-amino-acid chain; its full sequence is GMP synthase [glutamine-hydrolyzing] (509 aa).

The 190-residue stretch at 4 to 193 folds into the Glutamine amidotransferase type-1 domain; it reads KILILDFGSQ…VVHICGCSQD (190 aa). Catalysis depends on Cys79, which acts as the Nucleophile. Active-site residues include His167 and Glu169. One can recognise a GMPS ATP-PPase domain in the interval 194–384; it reads WTPDAFVETT…LGIDDIILKR (191 aa). ATP is bound at residue 221–227; the sequence is SGGVDSS.

Homodimer.

The enzyme catalyses XMP + L-glutamine + ATP + H2O = GMP + L-glutamate + AMP + diphosphate + 2 H(+). It functions in the pathway purine metabolism; GMP biosynthesis; GMP from XMP (L-Gln route): step 1/1. In terms of biological role, catalyzes the synthesis of GMP from XMP. In Cytophaga hutchinsonii (strain ATCC 33406 / DSM 1761 / CIP 103989 / NBRC 15051 / NCIMB 9469 / D465), this protein is GMP synthase [glutamine-hydrolyzing].